Consider the following 534-residue polypeptide: Major facilitator-type transporter sor6 (534 aa).

N-linked (GlcNAc...) asparagine glycosylation is found at asparagine 29 and asparagine 36. Helical transmembrane passes span 66–86, 103–123, 160–180, 182–202, 209–229, 241–261, 318–338, 354–374, 395–415, 424–444, 456–476, and 486–506; these read WFLTSIVTFSVFAVTFTSSAY, LFITGVSVFVLGFAIGPAVWG, AMVAFMAGSAGSPNIATLIVL, FLAGTFGGSPLVNSGGAIADL, GLAMTIYCVAPFLGPILGPIV, WVQGMCTIFIGVIGIIGVIFV, IVLIASLYMAIIYGTVYMFLG, FGGLAFLGMMVGIIIGLGYAI, LPPAIAGAVALPIGMFAFAWT, VSIVLSAPFGFGVVLVILPIV, ASVLAAAAVFRSIMGAVFPLF, and IHWATSIPAFLTLVCMPFPFF.

It belongs to the major facilitator superfamily. Sugar transporter (TC 2.A.1.1) family.

Its subcellular location is the membrane. Major facilitator-type transporter; part of the gene cluster that mediates the biosynthesis of sorbicillinoids, a diverse group of yellow secondary metabolites that restrict growth of competing pathogenic fungi but not of bacteria. This chain is Major facilitator-type transporter sor6, found in Hypocrea jecorina (strain QM6a) (Trichoderma reesei).